The primary structure comprises 146 residues: Hemoglobin subunit beta-C (146 aa).

The Globin domain maps to 2 to 146 (EWTDFERATI…VVSSLGRQYH (145 aa)). Heme b-binding residues include His63 and His92.

Belongs to the globin family. As to quaternary structure, hbC is a heterotetramer of two alpha chains and two beta-C chains. In terms of tissue distribution, red blood cells.

In terms of biological role, involved in oxygen transport from gills to the various peripheral tissues. This is Hemoglobin subunit beta-C (hbbc) from Trematomus bernacchii (Emerald rockcod).